The chain runs to 738 residues: Prolyl oligopeptidase A (738 aa).

Residues serine 581, aspartate 665, and histidine 701 each act as charge relay system in the active site.

Belongs to the peptidase S9A family. As to quaternary structure, monomer.

The enzyme catalyses Hydrolysis of Pro-|-Xaa &gt;&gt; Ala-|-Xaa in oligopeptides.. Functionally, housekeeping prolyl oligopeptidase (POP) that behaves like a conventional POP by cleaving peptide bonds on the C-terminal side of prolyl residues within peptides that are up to approximately 30 amino acids long. In Galerina marginata (strain CBS 339.88), this protein is Prolyl oligopeptidase A.